The primary structure comprises 339 residues: Anthranilate phosphoribosyltransferase (339 aa).

5-phospho-alpha-D-ribose 1-diphosphate is bound by residues glycine 79, 82–83 (GD), serine 87, 89–92 (NIST), 107–115 (KHGNRSISS), and serine 119. Glycine 79 serves as a coordination point for anthranilate. Serine 91 contributes to the Mg(2+) binding site. Residue asparagine 110 coordinates anthranilate. Anthranilate is bound at residue arginine 165. 2 residues coordinate Mg(2+): aspartate 224 and glutamate 225.

This sequence belongs to the anthranilate phosphoribosyltransferase family. Homodimer. Requires Mg(2+) as cofactor.

The catalysed reaction is N-(5-phospho-beta-D-ribosyl)anthranilate + diphosphate = 5-phospho-alpha-D-ribose 1-diphosphate + anthranilate. It functions in the pathway amino-acid biosynthesis; L-tryptophan biosynthesis; L-tryptophan from chorismate: step 2/5. In terms of biological role, catalyzes the transfer of the phosphoribosyl group of 5-phosphorylribose-1-pyrophosphate (PRPP) to anthranilate to yield N-(5'-phosphoribosyl)-anthranilate (PRA). This chain is Anthranilate phosphoribosyltransferase, found in Listeria monocytogenes serotype 4a (strain HCC23).